The following is a 436-amino-acid chain: MFESKINPLWQSFILAVQEEVKPALGCTEPISLALAAAAAAAELNGTVERIDAWVSPNLMKNGMGVTVPGTGMVGLPIAAALGALGGDAKAGLEVLKDASAKAVADAKAMLAAGHVAVMLQEPCNDILFSRAKVYSGDSWACVTIVGDHTNIVRIETDKGVVFTQADNAQEEEKTSPLGVLSHTSLEEILAFVNAVPFDAIRFILDAARLNGALSQEGLRGSWGLHIGSTLAKQCDRGLLAKDLSTAILIRTSAASDARMGGATLPAMSNSGSGNQGITATVPVMVVAEHVGADDERLARALMLSHLSAIYIHHQLPRLSALCAATTAAMGAAAGMAWLIDGRYDTIAMAISSMIGDVSGMICDGASNSCAMKVSTSASAAWKAVLMALDDTAVTGNEGIVAHNVEQSISNLCSLACRSMQQTDKQIIEIMASKAH.

The protein belongs to the UPF0597 family.

This Salmonella heidelberg (strain SL476) protein is UPF0597 protein YhaM.